The sequence spans 416 residues: Glutamyl-tRNA reductase 1 (416 aa).

Substrate-binding positions include 57-60 (TCNR), S113, 118-120 (DFE), and Q124. The Nucleophile role is filled by C58. 193–198 (GTGKIG) lines the NADP(+) pocket.

The protein belongs to the glutamyl-tRNA reductase family. In terms of assembly, homodimer.

It catalyses the reaction (S)-4-amino-5-oxopentanoate + tRNA(Glu) + NADP(+) = L-glutamyl-tRNA(Glu) + NADPH + H(+). It functions in the pathway porphyrin-containing compound metabolism; protoporphyrin-IX biosynthesis; 5-aminolevulinate from L-glutamyl-tRNA(Glu): step 1/2. In terms of biological role, catalyzes the NADPH-dependent reduction of glutamyl-tRNA(Glu) to glutamate 1-semialdehyde (GSA). The sequence is that of Glutamyl-tRNA reductase 1 from Flavobacterium johnsoniae (strain ATCC 17061 / DSM 2064 / JCM 8514 / BCRC 14874 / CCUG 350202 / NBRC 14942 / NCIMB 11054 / UW101) (Cytophaga johnsonae).